Consider the following 1036-residue polypeptide: uncharacterized protein (1036 aa).

A run of 2 helical transmembrane segments spans residues 4–24 (YLFI…NASL) and 1004–1024 (ILWV…VLFL).

The protein belongs to the MG414/MG415 family.

It is found in the cell membrane. This is an uncharacterized protein from Mycoplasma genitalium (strain ATCC 33530 / DSM 19775 / NCTC 10195 / G37) (Mycoplasmoides genitalium).